The following is a 273-amino-acid chain: MHDANIRVAIAGAGGRMGRQLIQAALALEGVQLGAALEREGSSLLGSDAGELAGAGKTGVTVQSSLDAVKDDFDVFIDFTRPEGTLNHLAFCRQHGKGMVIGTTGFDEAGKQAIRDAAADIAIVFAANFSVGVNVMLKLLEKAAKVMGDYTDIEIIEAHHRHKVDAPSGTALAMGEAIAHALDKDLKDCAVYSRESHTGERVPGTIGFATVRAGDIVGEHTAMFADIGERLEITHKASSRMTFANGAVRSAFWLSGKESGLFDMRDVLDLNSL.

NAD(+)-binding positions include Gly12–Met17 and Glu38. NADP(+) is bound at residue Arg39. NAD(+) contacts are provided by residues Gly102–Thr104 and Ala126–Phe129. Residue His159 is the Proton donor/acceptor of the active site. His160 contacts (S)-2,3,4,5-tetrahydrodipicolinate. The Proton donor role is filled by Lys163. Gly169–Thr170 provides a ligand contact to (S)-2,3,4,5-tetrahydrodipicolinate.

The protein belongs to the DapB family. Homotetramer.

It is found in the cytoplasm. The enzyme catalyses (S)-2,3,4,5-tetrahydrodipicolinate + NAD(+) + H2O = (2S,4S)-4-hydroxy-2,3,4,5-tetrahydrodipicolinate + NADH + H(+). It catalyses the reaction (S)-2,3,4,5-tetrahydrodipicolinate + NADP(+) + H2O = (2S,4S)-4-hydroxy-2,3,4,5-tetrahydrodipicolinate + NADPH + H(+). The protein operates within amino-acid biosynthesis; L-lysine biosynthesis via DAP pathway; (S)-tetrahydrodipicolinate from L-aspartate: step 4/4. In terms of biological role, catalyzes the conversion of 4-hydroxy-tetrahydrodipicolinate (HTPA) to tetrahydrodipicolinate. This Shigella boydii serotype 18 (strain CDC 3083-94 / BS512) protein is 4-hydroxy-tetrahydrodipicolinate reductase.